The chain runs to 962 residues: Glycine dehydrogenase (decarboxylating) (962 aa).

The residue at position 709 (lysine 709) is an N6-(pyridoxal phosphate)lysine.

Belongs to the GcvP family. In terms of assembly, the glycine cleavage system is composed of four proteins: P, T, L and H. The cofactor is pyridoxal 5'-phosphate.

It carries out the reaction N(6)-[(R)-lipoyl]-L-lysyl-[glycine-cleavage complex H protein] + glycine + H(+) = N(6)-[(R)-S(8)-aminomethyldihydrolipoyl]-L-lysyl-[glycine-cleavage complex H protein] + CO2. In terms of biological role, the glycine cleavage system catalyzes the degradation of glycine. The P protein binds the alpha-amino group of glycine through its pyridoxal phosphate cofactor; CO(2) is released and the remaining methylamine moiety is then transferred to the lipoamide cofactor of the H protein. The sequence is that of Glycine dehydrogenase (decarboxylating) from Shewanella baltica (strain OS223).